The chain runs to 201 residues: Mediator of RNA polymerase II transcription subunit 22 (201 aa).

A coiled-coil region spans residues 93 to 123; that stretch reads SVNEAIDQRNQQLRALQEECDRKLIALRDEV. The disordered stretch occupies residues 166–201; sequence LSAPLLASPEPSAGGPLQAAAPTHSHAGGPGPTEHA.

As to quaternary structure, component of the Mediator complex, which is composed of MED1, MED4, MED6, MED7, MED8, MED9, MED10, MED11, MED12, MED13, MED13L, MED14, MED15, MED16, MED17, MED18, MED19, MED20, MED21, MED22, MED23, MED24, MED25, MED26, MED27, MED29, MED30, MED31, CCNC, CDK8 and CDC2L6/CDK11. The MED12, MED13, CCNC and CDK8 subunits form a distinct module termed the CDK8 module. Mediator containing the CDK8 module is less active than Mediator lacking this module in supporting transcriptional activation. Individual preparations of the Mediator complex lacking one or more distinct subunits have been variously termed ARC, CRSP, DRIP, PC2, SMCC and TRAP.

It localises to the nucleus. Its function is as follows. Component of the Mediator complex, a coactivator involved in the regulated transcription of nearly all RNA polymerase II-dependent genes. Mediator functions as a bridge to convey information from gene-specific regulatory proteins to the basal RNA polymerase II transcription machinery. Mediator is recruited to promoters by direct interactions with regulatory proteins and serves as a scaffold for the assembly of a functional preinitiation complex with RNA polymerase II and the general transcription factors. In Bos taurus (Bovine), this protein is Mediator of RNA polymerase II transcription subunit 22 (MED22).